The following is a 350-amino-acid chain: Cephaeline 6'-O-methyltransferase IpeOMT1 (350 aa).

Gly193, Asp216, Asp236, Met237, and Lys250 together coordinate S-adenosyl-L-methionine. Residue His254 is the Proton acceptor of the active site.

Belongs to the class I-like SAM-binding methyltransferase superfamily. Cation-independent O-methyltransferase family. In terms of tissue distribution, expressed in roots.

It localises to the cytoplasm. It is found in the cytosol. The enzyme catalyses cephaeline + S-adenosyl-L-methionine = emetine + S-adenosyl-L-homocysteine + H(+). It carries out the reaction deacetylisoipecoside + S-adenosyl-L-methionine = 6-O-methyldeacetylisoipecoside + S-adenosyl-L-homocysteine + H(+). The catalysed reaction is 7-O-methyldeacetylisoipecoside + S-adenosyl-L-methionine = 6,7-O,O-dimethyldeacetylisoipecoside + S-adenosyl-L-homocysteine + H(+). It catalyses the reaction norcoclaurine + S-adenosyl-L-methionine = coclaurine + S-adenosyl-L-homocysteine + H(+). The enzyme catalyses (S)-norprotosinomenine + S-adenosyl-L-methionine = (S)-6-O-methylnorprotosinomenine + S-adenosyl-L-homocysteine + H(+). It carries out the reaction (R)-norprotosinomenine + S-adenosyl-L-methionine = (R)-6-O-methylnorprotosinomenine + S-adenosyl-L-homocysteine + H(+). It participates in alkaloid biosynthesis. Functionally, O-methyltransferase involved in the biosynthesis of ipecac and benzylisoquinoline monoterpenoid-isoquinoline alkaloids natural products, starting by the condensation of dopamine and secologanin, and including emetine and cephaeline, drugs used both as anti-protozoal (e.g. treatment of ameobiasis) and as emetic agents. Mediates cephaeline 6'-O-methylation to produce emetine. Catalyzes the 6-O-methylation of N-deacetylisoipecoside, 7-O-methyl-N-deacetylisoipecoside, isococlaurine, norcoclaurine, (S)-norprotosinomenine and (R)-norprotosinomenine, and, with a lower efficiency, of 4'-O-methyllaudanosoline, isoorientaline and protosinomenine. Supports also the 4'-O-methylation of nororientaline. The sequence is that of Cephaeline 6'-O-methyltransferase IpeOMT1 from Carapichea ipecacuanha (Ipecac).